Reading from the N-terminus, the 453-residue chain is Cyclic GMP-AMP phosphodiesterase SMPDL3A (453 aa).

The signal sequence occupies residues M1 to G22. Positions 45 and 47 each coordinate Zn(2+). A disulfide bridge links C62 with C81. N-linked (GlcNAc...) asparagine glycosylation is present at N69. D110 contacts Zn(2+). H114 contributes to the ATP binding site. The N-linked (GlcNAc...) asparagine glycan is linked to N131. N151 serves as a coordination point for Zn(2+). Residues N151 and H152 each coordinate ATP. N222 and N238 each carry an N-linked (GlcNAc...) asparagine glycan. A Zn(2+)-binding site is contributed by H252. N263 carries an N-linked (GlcNAc...) asparagine glycan. Positions 293 and 295 each coordinate Zn(2+). N356 carries an N-linked (GlcNAc...) asparagine glycan. Disulfide bonds link C420-C424 and C430-C443. N437 carries an N-linked (GlcNAc...) asparagine glycan.

This sequence belongs to the acid sphingomyelinase family. As to quaternary structure, monomer. Homodimer; homodimerizes following 2',3'-cGAMP-binding. Zn(2+) is required as a cofactor. N-glycosylation is required for protein maturation, secretion and phosphodiesterase activity. As to expression, detected in blood serum. Detected in macrophages (at protein level).

The protein localises to the secreted. It carries out the reaction 2',3'-cGAMP + H2O = 5'-pGpA(2'-5') + H(+). The enzyme catalyses 5'-pGpA(2'-5') + H2O = 5'-GpA(2'-5') + phosphate. The catalysed reaction is a ribonucleoside 5'-triphosphate + H2O = a ribonucleoside 5'-diphosphate + phosphate + H(+). It catalyses the reaction ATP + H2O = ADP + phosphate + H(+). Its activity is regulated as follows. Requires micromolar levels of Zn(2+) for activity. Inhibited by millimolar levels of Zn(2+). In terms of biological role, cyclic-nucleotide phosphodiesterase that acts as a negative regulator of innate immunity by mediating degradation of 2',3'-cGAMP, thereby inhibiting the cGAS-STING signaling. Specifically linearizes 2',3'-cGAMP into 2'5'-bond pGpA and further hydrolyzes pGpA to produce GpA. Also has in vitro nucleotide phosphodiesterase activity with nucleoside triphosphates, such as ATP. Has in vitro activity with p-nitrophenyl-TMP. Has lower activity with nucleoside diphosphates, and no activity with nucleoside monophosphates. Has in vitro activity with CDP-choline, giving rise to CMP and phosphocholine. Has in vitro activity with CDP-ethanolamine. Does not have sphingomyelin phosphodiesterase activity. The protein is Cyclic GMP-AMP phosphodiesterase SMPDL3A of Homo sapiens (Human).